Reading from the N-terminus, the 1102-residue chain is Probable ubiquitin-conjugating enzyme E2 23 (1102 aa).

Disordered regions lie at residues 1–20, 25–111, 396–418, 579–602, 661–710, and 760–800; these read MEHE…DSSV, ASLS…DGNY, LPKV…PVHE, SPGN…SHQE, DESV…DIYA, and QAES…KNIL. Over residues 31–44 the composition is skewed to basic and acidic residues; the sequence is DSEHPNIYRQDIVK. Positions 59-88 are enriched in acidic residues; that stretch reads GDSDSDSDISDEEEDDDDDEDNDDDDEDVE. Polar residues predominate over residues 579 to 596; it reads SPGNSFEEATQQDNGYQD. Polar residues predominate over residues 779 to 800; sequence SKVNVTDNCESKGTQANAKNIL. Residues 850–1010 enclose the UBC core domain; that stretch reads QWFKKVDQDW…TFLLNCKTMM (161 aa). The active-site Glycyl thioester intermediate is cysteine 936.

Belongs to the ubiquitin-conjugating enzyme family.

It catalyses the reaction S-ubiquitinyl-[E1 ubiquitin-activating enzyme]-L-cysteine + [E2 ubiquitin-conjugating enzyme]-L-cysteine = [E1 ubiquitin-activating enzyme]-L-cysteine + S-ubiquitinyl-[E2 ubiquitin-conjugating enzyme]-L-cysteine.. It participates in protein modification; protein ubiquitination. Accepts the ubiquitin from the E1 complex and catalyzes its covalent attachment to other proteins. The chain is Probable ubiquitin-conjugating enzyme E2 23 (UBC23) from Arabidopsis thaliana (Mouse-ear cress).